Here is a 182-residue protein sequence, read N- to C-terminus: LIM domain-containing protein C (182 aa).

2 LIM zinc-binding domains span residues 3–63 (SICP…LFRQ) and 110–170 (TNCP…KFGP).

The protein localises to the cell projection. The protein resides in the pseudopodium. It is found in the cytoplasm. It localises to the cell cortex. Its subcellular location is the cytoskeleton. In terms of biological role, binds to F-actin and may modulate the chemotactic response during early development and contribute to the maintenance of the strength of the actin cytoskeleton. The polypeptide is LIM domain-containing protein C (limC) (Dictyostelium discoideum (Social amoeba)).